Here is a 692-residue protein sequence, read N- to C-terminus: Proprotein convertase subtilisin/kexin type 9 (692 aa).

The first 30 residues, 1 to 30 (MGTVSSRRSWWPLPLLLLLLLLLGPAGARA), serve as a signal peptide directing secretion. The propeptide occupies 31 to 152 (QEDEDGDYEE…IEEDSSVFAQ (122 aa)). Tyr-38 is modified (sulfotyrosine). Ser-47 carries the phosphoserine modification. Residues 77 to 149 (TYVVVLKEET…VDYIEEDSSV (73 aa)) form the Inhibitor I9 domain. Residues 155 to 461 (PWNLERITPP…GWQLFCRTVW (307 aa)) enclose the Peptidase S8 domain. Active-site charge relay system residues include Asp-186 and His-226. Disulfide bonds link Cys-223–Cys-255 and Cys-323–Cys-358. The active-site Charge relay system is the Ser-386. The tract at residues 450 to 692 (GAGWQLFCRT…HLAQASQELQ (243 aa)) is C-terminal domain. 3 cysteine pairs are disulfide-bonded: Cys-457/Cys-527, Cys-477/Cys-526, and Cys-486/Cys-509. Asn-533 carries an N-linked (GlcNAc...) asparagine glycan. Intrachain disulfides connect Cys-534–Cys-601, Cys-552–Cys-600, Cys-562–Cys-588, Cys-608–Cys-679, Cys-626–Cys-678, and Cys-635–Cys-654. Ser-688 is subject to Phosphoserine.

The protein belongs to the peptidase S8 family. In terms of assembly, monomer. Can self-associate to form dimers and higher multimers which may have increased LDLR degrading activity. The precursor protein but not the mature protein may form multimers. Interacts with APOB, VLDLR, LRP8/APOER2 and BACE1. The full-length immature form (pro-PCSK9) interacts with SCNN1A, SCNN1B and SCNN1G. The pro-PCSK9 form (via C-terminal domain) interacts with LDLR. Interacts (via the C-terminal domain) with ANXA2 (via repeat Annexin 1); the interaction inhibits the degradation of LDLR. Ca(2+) is required as a cofactor. In terms of processing, cleavage by furin and PCSK5 generates a truncated inactive protein that is unable to induce LDLR degradation. Post-translationally, undergoes autocatalytic cleavage in the endoplasmic reticulum to release the propeptide from the N-terminus and the cleavage of the propeptide is strictly required for its maturation and activation. The cleaved propeptide however remains associated with the catalytic domain through non-covalent interactions, preventing potential substrates from accessing its active site. As a result, it is secreted from cells as a propeptide-containing, enzymatically inactive protein. Phosphorylation protects the propeptide against proteolysis.

It localises to the cytoplasm. It is found in the secreted. The protein localises to the endosome. Its subcellular location is the lysosome. The protein resides in the cell surface. It localises to the endoplasmic reticulum. It is found in the golgi apparatus. Its activity is regulated as follows. Its proteolytic activity is autoinhibited by the non-covalent binding of the propeptide to the catalytic domain. Inhibited by EGTA. Its function is as follows. Crucial player in the regulation of plasma cholesterol homeostasis. Binds to low-density lipid receptor family members: low density lipoprotein receptor (LDLR), very low density lipoprotein receptor (VLDLR), apolipoprotein E receptor (LRP1/APOER) and apolipoprotein receptor 2 (LRP8/APOER2), and promotes their degradation in intracellular acidic compartments. Acts via a non-proteolytic mechanism to enhance the degradation of the hepatic LDLR through a clathrin LDLRAP1/ARH-mediated pathway. May prevent the recycling of LDLR from endosomes to the cell surface or direct it to lysosomes for degradation. Can induce ubiquitination of LDLR leading to its subsequent degradation. Inhibits intracellular degradation of APOB via the autophagosome/lysosome pathway in a LDLR-independent manner. Involved in the disposal of non-acetylated intermediates of BACE1 in the early secretory pathway. Inhibits epithelial Na(+) channel (ENaC)-mediated Na(+) absorption by reducing ENaC surface expression primarily by increasing its proteasomal degradation. Regulates neuronal apoptosis via modulation of LRP8/APOER2 levels and related anti-apoptotic signaling pathways. This Pan troglodytes (Chimpanzee) protein is Proprotein convertase subtilisin/kexin type 9 (PCSK9).